Here is a 249-residue protein sequence, read N- to C-terminus: Homeobox protein TGIF2LX (249 aa).

2 disordered regions span residues 1–62 (MEAA…KRKG) and 126–192 (DPIV…KLTV). The segment covering 9–27 (AETRSRVEKDSRRAKKDSP) has biased composition (basic and acidic residues). The segment covering 28–46 (AKTQSPAQDTSIMLRNNAD) has biased composition (polar residues). The homeobox; TALE-type DNA-binding region spans 55–118 (EHKKKRKGYL…INARRRILPD (64 aa)). The segment covering 159–172 (DNVQSLPLRSSPKG) has biased composition (polar residues).

The protein belongs to the TALE/TGIF homeobox family.

The protein resides in the nucleus. Its function is as follows. May have a transcription role in testis. The protein is Homeobox protein TGIF2LX (TGIF2LX) of Macaca fascicularis (Crab-eating macaque).